An 86-amino-acid polypeptide reads, in one-letter code: Large ribosomal subunit protein bL31B (86 aa).

Belongs to the bacterial ribosomal protein bL31 family. Type B subfamily. Part of the 50S ribosomal subunit.

In Chloroherpeton thalassium (strain ATCC 35110 / GB-78), this protein is Large ribosomal subunit protein bL31B.